A 131-amino-acid polypeptide reads, in one-letter code: D-ribose pyranase (131 aa).

Residue H20 is the Proton donor of the active site. Substrate-binding positions include D28, H98, and 120–122 (FSN).

This sequence belongs to the RbsD / FucU family. RbsD subfamily. Homodecamer.

The protein localises to the cytoplasm. The enzyme catalyses beta-D-ribopyranose = beta-D-ribofuranose. The protein operates within carbohydrate metabolism; D-ribose degradation; D-ribose 5-phosphate from beta-D-ribopyranose: step 1/2. Catalyzes the interconversion of beta-pyran and beta-furan forms of D-ribose. The protein is D-ribose pyranase of Levilactobacillus brevis (strain ATCC 367 / BCRC 12310 / CIP 105137 / JCM 1170 / LMG 11437 / NCIMB 947 / NCTC 947) (Lactobacillus brevis).